The primary structure comprises 81 residues: Cytochrome b559 subunit alpha (81 aa).

The chain crosses the membrane as a helical span at residues 21–35; sequence VIHALTIPALFLAGW. His-23 contacts heme.

The protein belongs to the PsbE/PsbF family. In terms of assembly, heterodimer of an alpha subunit and a beta subunit. PSII is composed of 1 copy each of membrane proteins PsbA, PsbB, PsbC, PsbD, PsbE, PsbF, PsbH, PsbI, PsbJ, PsbK, PsbL, PsbM, PsbT, PsbX, PsbY, PsbZ, Psb30/Ycf12, peripheral proteins PsbO, CyanoQ (PsbQ), PsbU, PsbV and a large number of cofactors. It forms dimeric complexes. The cofactor is heme b.

It is found in the cellular thylakoid membrane. In terms of biological role, this b-type cytochrome is tightly associated with the reaction center of photosystem II (PSII). PSII is a light-driven water:plastoquinone oxidoreductase that uses light energy to abstract electrons from H(2)O, generating O(2) and a proton gradient subsequently used for ATP formation. It consists of a core antenna complex that captures photons, and an electron transfer chain that converts photonic excitation into a charge separation. In Synechococcus sp. (strain JA-2-3B'a(2-13)) (Cyanobacteria bacterium Yellowstone B-Prime), this protein is Cytochrome b559 subunit alpha.